Consider the following 164-residue polypeptide: Phosphopantetheine adenylyltransferase (164 aa).

S10 is a substrate binding site. ATP contacts are provided by residues S10–F11 and H18. The substrate site is built by K42, T79, and R93. Residues G94–R96, E104, and V129–S135 each bind ATP.

The protein belongs to the bacterial CoaD family. As to quaternary structure, homohexamer. Mg(2+) serves as cofactor.

The protein resides in the cytoplasm. The catalysed reaction is (R)-4'-phosphopantetheine + ATP + H(+) = 3'-dephospho-CoA + diphosphate. Its pathway is cofactor biosynthesis; coenzyme A biosynthesis; CoA from (R)-pantothenate: step 4/5. Functionally, reversibly transfers an adenylyl group from ATP to 4'-phosphopantetheine, yielding dephospho-CoA (dPCoA) and pyrophosphate. This chain is Phosphopantetheine adenylyltransferase, found in Bradyrhizobium sp. (strain ORS 278).